The sequence spans 474 residues: Ribosomal RNA small subunit methyltransferase F (474 aa).

Residues 121-127, Glu145, Asp172, and Asp190 each bind S-adenosyl-L-methionine; that span reads ASAPGSK. The active-site Nucleophile is Cys243.

This sequence belongs to the class I-like SAM-binding methyltransferase superfamily. RsmB/NOP family.

Its subcellular location is the cytoplasm. The enzyme catalyses cytidine(1407) in 16S rRNA + S-adenosyl-L-methionine = 5-methylcytidine(1407) in 16S rRNA + S-adenosyl-L-homocysteine + H(+). Functionally, specifically methylates the cytosine at position 1407 (m5C1407) of 16S rRNA. The chain is Ribosomal RNA small subunit methyltransferase F from Shewanella piezotolerans (strain WP3 / JCM 13877).